An 80-amino-acid chain; its full sequence is Conotoxin Vi6.2 (80 aa).

A signal peptide spans 1–22 (MKLTCVLITTVLFLTASQLITA). Residues 23–47 (DYSRDKRQYRAVRLRDEMRNFKGAR) constitute a propeptide that is removed on maturation. 3 cysteine pairs are disulfide-bonded: Cys49–Cys62, Cys56–Cys67, and Cys61–Cys77. A 4-hydroxyproline mark is found at Pro60 and Pro63.

It belongs to the conotoxin O1 superfamily. Expressed by the venom duct.

The protein resides in the secreted. Its function is as follows. Ion channel inhibitor that inhibits the increase in intracellular calcium upon depolarization in DRG neurons. In vivo, both intraperitoneal and intracranial injections into mice induce hyperactivity. The protein is Conotoxin Vi6.2 of Conus virgo (Virgin cone).